The chain runs to 249 residues: Proteasome activator complex subunit 1 (249 aa).

The disordered stretch occupies residues 60-102 (PLDIPVPDPVKEKEKEERKKQQEKEDKDEKKKGEDEDKGPPCG). Positions 68–98 (PVKEKEKEERKKQQEKEDKDEKKKGEDEDKG) are enriched in basic and acidic residues.

The protein belongs to the PA28 family. In terms of assembly, heterodimer of PSME1 and PSME2, which forms a hexameric ring. PSME1 can form homoheptamers.

Implicated in immunoproteasome assembly and required for efficient antigen processing. The PA28 activator complex enhances the generation of class I binding peptides by altering the cleavage pattern of the proteasome. This Homo sapiens (Human) protein is Proteasome activator complex subunit 1 (PSME1).